A 1465-amino-acid polypeptide reads, in one-letter code: DNA polymerase III PolC-type (1465 aa).

Positions 427–583 constitute an Exonuclease domain; the sequence is YVVFDVETTG…YDAEATGRLL (157 aa).

This sequence belongs to the DNA polymerase type-C family. PolC subfamily.

The protein localises to the cytoplasm. It catalyses the reaction DNA(n) + a 2'-deoxyribonucleoside 5'-triphosphate = DNA(n+1) + diphosphate. In terms of biological role, required for replicative DNA synthesis. This DNA polymerase also exhibits 3' to 5' exonuclease activity. The polypeptide is DNA polymerase III PolC-type (Streptococcus pyogenes serotype M18 (strain MGAS8232)).